Here is a 1430-residue protein sequence, read N- to C-terminus: Caskin-1 (1430 aa).

ANK repeat units lie at residues Asp48 to Ile77, Lys81 to Val110, Glu114 to Ile143, Ser147 to Leu176, Asn188 to Arg217, and Lys220 to Val249. Tyr253 is modified (phosphotyrosine). The SH3 domain maps to Ser281–Lys347. Residues Arg348–Pro372 form a disordered region. Ser358 carries the phosphoserine modification. Residues Ile375–Ser471 form a CASK-binding region. Arg398 is modified (omega-N-methylarginine). The segment covering Gln421–Gly430 has biased composition (polar residues). The tract at residues Gln421–Glu472 is disordered. Ser423 and Ser432 each carry phosphoserine. SAM domains follow at residues Lys474–Pro537 and His543–Leu607. Residues Ser635 and Ser648 each carry the phosphoserine modification. Positions Leu667–Glu679 are enriched in low complexity. Disordered stretches follow at residues Leu667–Ser1001, Gly1015–Arg1040, Gly1055–Leu1371, and Lys1388–Thr1407. Polar residues predominate over residues Asn683–Glu711. Ser722 and Ser727 each carry phosphoserine. Residue Thr740 is modified to Phosphothreonine. Ser790 carries the phosphoserine modification. The span at Pro847–Ala859 shows a compositional bias: pro residues. Phosphoserine is present on residues Ser890, Ser892, and Ser988. A compositionally biased stretch (pro residues) spans Gly1027 to Pro1036. Thr1066 is subject to Phosphothreonine. Ser1068 bears the Phosphoserine mark. A compositionally biased stretch (basic and acidic residues) spans Asp1147–Asp1159. The span at Pro1190–Leu1214 shows a compositional bias: pro residues. Phosphoserine is present on Ser1258. Thr1267 carries the phosphothreonine modification. The span at Thr1267 to Pro1282 shows a compositional bias: pro residues. Low complexity-rich tracts occupy residues Lys1283 to Pro1298, Pro1308 to Pro1326, and Pro1344 to Ser1358. The residue at position 1362 (Ser1362) is a Phosphoserine. The segment covering Lys1388–Ser1406 has biased composition (basic and acidic residues).

In terms of assembly, polymerizes, via the tandem SAM domains, to form long, 8 nM wide fibers, upon which other proteins can assemble. Binds the CaM kinase domain of CASK. Forms a ternary complex with CASK and LIN7A, LIN7B or LIN7C. Competes with APBA1 that forms a similar complex with CASK and LIN7 proteins. The tripartite complex CASKIN1/CASK/LIN7(A/B/C) binds the cytoplasmic tail of NRXN1. Expressed in brain. Localized primarily to the neuropil and enriched in synaptic areas (at protein level).

It localises to the cytoplasm. Its function is as follows. May link the scaffolding protein CASK to downstream intracellular effectors. In Rattus norvegicus (Rat), this protein is Caskin-1 (Caskin1).